A 79-amino-acid chain; its full sequence is Omega-phylotoxin-To1a (79 aa).

A signal peptide spans 1 to 21 (MKKTFCFILILVCIVLKSVNA). Residues 22 to 38 (EEEDNFEESSLEMETAR) constitute a propeptide that is removed on maturation. Disulfide bonds link C39–C59, C46–C63, C58–C78, and C65–C76.

Expressed by the venom duct.

The protein resides in the secreted. Functionally, insect-specific toxin that probably acts as an inhibitor of presynaptic insect calcium channels, presumably Cav2 subtype. In vivo, induces immediate paralysis on insects, followed by death when high doses are injected. This is Omega-phylotoxin-To1a from Tibellus oblongus (Oblong running crab spider).